The primary structure comprises 387 residues: EARP-interacting protein homolog (387 aa).

WD repeat units lie at residues 132 to 172 (TAHG…SKAV), 182 to 222 (KGQL…QIYC), 226 to 266 (AHGQ…DPVK), 270 to 310 (EHSH…SEPF), and 345 to 385 (EHED…KYHI).

The protein belongs to the WD repeat EIPR1 family.

This is EARP-interacting protein homolog from Gekko japonicus (Schlegel's Japanese gecko).